The following is a 73-amino-acid chain: Large ribosomal subunit protein uL24 (73 aa).

Basic and acidic residues predominate over residues 53–65 (NPKGGFIKKEKPM). The disordered stretch occupies residues 53-73 (NPKGGFIKKEKPMHISNVKKA).

This sequence belongs to the universal ribosomal protein uL24 family. Part of the 50S ribosomal subunit.

In terms of biological role, one of two assembly initiator proteins, it binds directly to the 5'-end of the 23S rRNA, where it nucleates assembly of the 50S subunit. Functionally, one of the proteins that surrounds the polypeptide exit tunnel on the outside of the subunit. The sequence is that of Large ribosomal subunit protein uL24 from Helicobacter pylori (strain J99 / ATCC 700824) (Campylobacter pylori J99).